The following is a 387-amino-acid chain: 8-amino-7-oxononanoate synthase (387 aa).

Arginine 19 is a substrate binding site. 106–107 is a pyridoxal 5'-phosphate binding site; it reads GY. Histidine 131 lines the substrate pocket. Positions 177, 205, and 234 each coordinate pyridoxal 5'-phosphate. Lysine 237 carries the post-translational modification N6-(pyridoxal phosphate)lysine. Substrate is bound at residue threonine 351.

It belongs to the class-II pyridoxal-phosphate-dependent aminotransferase family. BioF subfamily. Homodimer. The cofactor is pyridoxal 5'-phosphate.

It catalyses the reaction 6-carboxyhexanoyl-[ACP] + L-alanine + H(+) = (8S)-8-amino-7-oxononanoate + holo-[ACP] + CO2. The protein operates within cofactor biosynthesis; biotin biosynthesis. In terms of biological role, catalyzes the decarboxylative condensation of pimeloyl-[acyl-carrier protein] and L-alanine to produce 8-amino-7-oxononanoate (AON), [acyl-carrier protein], and carbon dioxide. This Methylococcus capsulatus (strain ATCC 33009 / NCIMB 11132 / Bath) protein is 8-amino-7-oxononanoate synthase.